The following is a 735-amino-acid chain: MIP-related peptides (735 aa).

A signal peptide spans 1–20 (MCTRPGLAALLVLMTSCASS). Residues 21-135 (FSRADTQSAS…EDSDTKVDTR (115 aa)) constitute a propeptide that is removed on maturation. The segment covering 33–65 (ALSAASADAQAARQQQEQHLVAQQQQQQQQQQQ) has biased composition (low complexity). Disordered regions lie at residues 33–212 (ALSA…FGKK) and 229–251 (FGKKSSGESAGDSGYISVASRGS). 2 stretches are compositionally biased toward polar residues: residues 66-76 (HSNNNEPQQRA) and 101-125 (PVSQPDLSPDFSNPMGSSLSQSGTP). Phenylalanine amide is present on residues Phe-142, Phe-153, and Phe-164. The segment covering 142 to 159 (FGKKRGQAPRFFGKKRAM) has biased composition (basic residues). Residues 168–184 (SSEFPTSNSEQLALDTR) constitute a propeptide that is removed on maturation. Phenylalanine amide is present on Phe-190. Residues 194-203 (SFPESNREQR) constitute a propeptide that is removed on maturation. Residues 194–204 (SFPESNREQRG) are compositionally biased toward basic and acidic residues. A phenylalanine amide mark is found at Phe-209 and Phe-229. Residues 214 to 229 (FDENVDIDERAAPRFF) constitute a propeptide, linker peptide. Positions 233-249 (SSGESAGDSGYISVASR) are excised as a propeptide. Phe-255 bears the Phenylalanine amide mark. Residues 259 to 267 (QDDDIMIAA) constitute a propeptide, linker peptide. Residue Phe-274 is modified to Phenylalanine amide. Residues 279–287 (SDDNVALDL) constitute a propeptide, linker peptide. A Phenylalanine amide modification is found at Phe-294. Residues 298-311 (QSSDLDDEISVALR) constitute a propeptide that is removed on maturation. Phe-317 bears the Phenylalanine amide mark. A propeptide spanning residues 321–332 (RADDEDILLGER) is cleaved from the precursor. The residue at position 338 (Phe-338) is a Phenylalanine amide. Positions 342–353 (RANDENISFSLR) are excised as a propeptide. 2 disordered regions span residues 352-373 (LRGSPRFFGKKRSDESDDDNIG) and 381-400 (RFFGKKRSDETDDENIGLMA). Phe-359 carries the phenylalanine amide modification. Residues 363–377 (RSDESDDDNIGLVAR) constitute a propeptide that is removed on maturation. Phenylalanine amide is present on Phe-383. A propeptide spanning residues 387-401 (RSDETDDENIGLMAR) is cleaved from the precursor. Phenylalanine amide is present on Phe-407. A propeptide spans 412–426 (SDGLDDGGNIIDVAT) (linker peptide). The disordered stretch occupies residues 430–464 (PRFFGKKRSNSDSSDKSSDSALSSSESGRQTRQAP). Phe-433 carries the phenylalanine amide modification. Positions 437-461 (RSNSDSSDKSSDSALSSSESGRQTR) are excised as a propeptide. Over residues 438-447 (SNSDSSDKSS) the composition is skewed to basic and acidic residues. Position 462 is a pyrrolidone carboxylic acid (Gln-462). Phenylalanine amide is present on Phe-467. Residues 471–493 (YVDEHHVSKRAAATAFPLIIEAR) constitute a propeptide that is removed on maturation. Gln-494 bears the Pyrrolidone carboxylic acid mark. At Phe-499 the chain carries Phenylalanine amide. The propeptide occupies 503–509 (EYRYPPR). Ile-515 carries the post-translational modification Isoleucine amide. Residues 519-546 (FSLYRSPGKYSLSSPYMSAKEFKETFRR) constitute a propeptide that is removed on maturation. Met-552 carries the post-translational modification Methionine amide. Positions 556–585 (TAELNEEGSDDFTNDDTDDENEYDETVLFK) are excised as a propeptide. Position 592 is a valine amide (Val-592). The residue at position 601 (Leu-601) is a Leucine amide. Isoleucine amide is present on Ile-610. Val-619 is modified (valine amide). Residue Ile-628 is modified to Isoleucine amide. A propeptide spans 632–661 (DLDWYQKALCAEADILELDDCADFLGNDDV) (linker peptide). Gln-664 is modified (pyrrolidone carboxylic acid). Ile-669 is subject to Isoleucine amide. Residues 674 to 705 (GEDVSERDYAQLLEALSRLQAIKQIKARIQNE) constitute a propeptide, linker peptide. Val-714 carries the valine amide modification. Residues 715 to 735 (GRRSEYNLGPFDEFVDESMER) constitute a propeptide that is removed on maturation.

In terms of tissue distribution, expressed in the CNS and peripheral tissues (the digestive tract, vasculature, and the reproductive organs).

It is found in the secreted. Has some structural and functional features similar to vertebrate opioid peptides. AMRPs are inhibitory on Aplysia esophagus, penis retractor muscle, and body wall muscle. This chain is MIP-related peptides (MRP), found in Aplysia californica (California sea hare).